The sequence spans 291 residues: Acetyl-coenzyme A carboxylase carboxyl transferase subunit beta (291 aa).

The 269-residue stretch at 23–291 (VYTKDPVSGE…TPASASVAKS (269 aa)) folds into the CoA carboxyltransferase N-terminal domain.

Belongs to the AccD/PCCB family. Acetyl-CoA carboxylase is a heterohexamer composed of biotin carboxyl carrier protein (AccB), biotin carboxylase (AccC) and two subunits each of ACCase subunit alpha (AccA) and ACCase subunit beta (AccD).

It is found in the cytoplasm. The enzyme catalyses N(6)-carboxybiotinyl-L-lysyl-[protein] + acetyl-CoA = N(6)-biotinyl-L-lysyl-[protein] + malonyl-CoA. It functions in the pathway lipid metabolism; malonyl-CoA biosynthesis; malonyl-CoA from acetyl-CoA: step 1/1. Functionally, component of the acetyl coenzyme A carboxylase (ACC) complex. Biotin carboxylase (BC) catalyzes the carboxylation of biotin on its carrier protein (BCCP) and then the CO(2) group is transferred by the transcarboxylase to acetyl-CoA to form malonyl-CoA. The protein is Acetyl-coenzyme A carboxylase carboxyl transferase subunit beta of Opitutus terrae (strain DSM 11246 / JCM 15787 / PB90-1).